Consider the following 185-residue polypeptide: ATP synthase subunit delta (185 aa).

Belongs to the ATPase delta chain family. F-type ATPases have 2 components, F(1) - the catalytic core - and F(0) - the membrane proton channel. F(1) has five subunits: alpha(3), beta(3), gamma(1), delta(1), epsilon(1). F(0) has three main subunits: a(1), b(2) and c(10-14). The alpha and beta chains form an alternating ring which encloses part of the gamma chain. F(1) is attached to F(0) by a central stalk formed by the gamma and epsilon chains, while a peripheral stalk is formed by the delta and b chains.

The protein localises to the cell inner membrane. Functionally, f(1)F(0) ATP synthase produces ATP from ADP in the presence of a proton or sodium gradient. F-type ATPases consist of two structural domains, F(1) containing the extramembraneous catalytic core and F(0) containing the membrane proton channel, linked together by a central stalk and a peripheral stalk. During catalysis, ATP synthesis in the catalytic domain of F(1) is coupled via a rotary mechanism of the central stalk subunits to proton translocation. Its function is as follows. This protein is part of the stalk that links CF(0) to CF(1). It either transmits conformational changes from CF(0) to CF(1) or is implicated in proton conduction. The protein is ATP synthase subunit delta of Pelagibacter ubique (strain HTCC1062).